The sequence spans 101 residues: Small ribosomal subunit protein uS14 (101 aa).

It belongs to the universal ribosomal protein uS14 family. Part of the 30S ribosomal subunit. Contacts proteins S3 and S10.

Its function is as follows. Binds 16S rRNA, required for the assembly of 30S particles and may also be responsible for determining the conformation of the 16S rRNA at the A site. The chain is Small ribosomal subunit protein uS14 from Pseudoalteromonas translucida (strain TAC 125).